The primary structure comprises 305 residues: T-cell immunoglobulin and mucin domain-containing protein 2 (305 aa).

A signal peptide spans 1-21 (MNQIQVFISGLILLLPGAVES). One can recognise an Ig-like V-type domain in the interval 22–125 (HTAVQGLAGH…AFHFVDYMLE (104 aa)). Over 22–231 (HTAVQGLAGH…QKPQKNLNKG (210 aa)) the chain is Extracellular. Intrachain disulfides connect C37–C109, C50–C61, and C56–C108. N-linked (GlcNAc...) asparagine glycosylation is found at N86 and N91. A disordered region spans residues 130-174 (ISTSPPTRPTATGRPTTISTRSTHVPTSTRVSTSTSPTPAHTETY). Residues 131 to 167 (STSPPTRPTATGRPTTISTRSTHVPTSTRVSTSTSPT) show a composition bias toward low complexity. Residues 232–252 (FYVGISIAALLILMLLSTMVI) traverse the membrane as a helical segment. The Cytoplasmic portion of the chain corresponds to 253 to 305 (TRYVVMKRKSESLSFVAFPISKIGASPKKVVERTRCEDQVYIIEDTPYPEEES).

It belongs to the immunoglobulin superfamily. TIM family. In terms of assembly, homodimer. As to expression, expressed on late differentiated Th2 cells. Expressed also on all splenic B-cells, with increased levels on germinal center B-cells, in the liver, especially in bile duct epithelial cells, and in renal tubule cells. Within retina, mainly expressed in Mueller cells.

The protein localises to the cell membrane. Functionally, cell surface glycoprotein that participates in iron homeostasis in the liver, the kidney, the retina and oligodendrocytes by acting as a receptor of H-ferritin. Mechanistically, mediates iron-containing ferritin uptake via an endocytic pathway, trafficking to endosomes and subsequently to lysosomes. Plays also an important role in the regulation of Th2 immunity. Receptor for SEMA4A involved in the regulation of T-cell function, enhancing T-cell activation. This is T-cell immunoglobulin and mucin domain-containing protein 2 (Timd2) from Mus musculus (Mouse).